The primary structure comprises 162 residues: NADH-quinone oxidoreductase subunit I (162 aa).

2 consecutive 4Fe-4S ferredoxin-type domains span residues 54–83 and 93–122; these read RRYE…INST and SSYE…ETNI. [4Fe-4S] cluster contacts are provided by Cys-63, Cys-66, Cys-69, Cys-73, Cys-102, Cys-105, Cys-108, and Cys-112.

The protein belongs to the complex I 23 kDa subunit family. In terms of assembly, NDH-1 is composed of 14 different subunits. Subunits NuoA, H, J, K, L, M, N constitute the membrane sector of the complex. The cofactor is [4Fe-4S] cluster.

The protein localises to the cell inner membrane. The catalysed reaction is a quinone + NADH + 5 H(+)(in) = a quinol + NAD(+) + 4 H(+)(out). Functionally, NDH-1 shuttles electrons from NADH, via FMN and iron-sulfur (Fe-S) centers, to quinones in the respiratory chain. The immediate electron acceptor for the enzyme in this species is believed to be ubiquinone. Couples the redox reaction to proton translocation (for every two electrons transferred, four hydrogen ions are translocated across the cytoplasmic membrane), and thus conserves the redox energy in a proton gradient. The protein is NADH-quinone oxidoreductase subunit I of Francisella tularensis subsp. tularensis (strain FSC 198).